We begin with the raw amino-acid sequence, 146 residues long: Large ribosomal subunit protein uL15 (146 aa).

A compositionally biased stretch (basic and acidic residues) spans 1–18 (MKLHELKPAEGSRKERNR). The interval 1–54 (MKLHELKPAEGSRKERNRVGRGVATGNGKTSGRGHKGQKARSGGGVRPGFEGGQ) is disordered. Over residues 42 to 52 (SGGGVRPGFEG) the composition is skewed to gly residues.

It belongs to the universal ribosomal protein uL15 family. Part of the 50S ribosomal subunit.

Functionally, binds to the 23S rRNA. This chain is Large ribosomal subunit protein uL15, found in Staphylococcus aureus (strain Mu3 / ATCC 700698).